We begin with the raw amino-acid sequence, 57 residues long: Granulin-1 (57 aa).

Disulfide bonds link C4–C16 and C10–C26.

It belongs to the granulin family. In terms of processing, granulins are disulfide bridged. As to expression, ubiquitous.

The protein resides in the secreted. Granulins have possible cytokine-like activity. They may play a role in inflammation, wound repair, and tissue remodeling. This chain is Granulin-1, found in Cyprinus carpio (Common carp).